The chain runs to 366 residues: GTP cyclohydrolase 1 type 2 homolog (366 aa).

Positions 64, 65, 102, 326, and 329 each coordinate Zn(2+).

It belongs to the GTP cyclohydrolase I type 2/NIF3 family. As to quaternary structure, toroid-shaped homohexamer that has a central cavity of about 38 Angstroms diameter.

The chain is GTP cyclohydrolase 1 type 2 homolog from Staphylococcus aureus (strain Mu50 / ATCC 700699).